A 115-amino-acid polypeptide reads, in one-letter code: Large ribosomal subunit protein bL19 (115 aa).

This sequence belongs to the bacterial ribosomal protein bL19 family.

This protein is located at the 30S-50S ribosomal subunit interface and may play a role in the structure and function of the aminoacyl-tRNA binding site. The polypeptide is Large ribosomal subunit protein bL19 (Baumannia cicadellinicola subsp. Homalodisca coagulata).